The following is a 196-amino-acid chain: Probable nicotinate-nucleotide adenylyltransferase (196 aa).

It belongs to the NadD family.

The enzyme catalyses nicotinate beta-D-ribonucleotide + ATP + H(+) = deamido-NAD(+) + diphosphate. The protein operates within cofactor biosynthesis; NAD(+) biosynthesis; deamido-NAD(+) from nicotinate D-ribonucleotide: step 1/1. Functionally, catalyzes the reversible adenylation of nicotinate mononucleotide (NaMN) to nicotinic acid adenine dinucleotide (NaAD). In Caldicellulosiruptor saccharolyticus (strain ATCC 43494 / DSM 8903 / Tp8T 6331), this protein is Probable nicotinate-nucleotide adenylyltransferase.